Consider the following 140-residue polypeptide: Hexon-interlacing protein (140 aa).

Residues 100–127 are a coiled coil; the sequence is LTALLAQLDSLTRELNVVSQQLLDLRQQ. S135 is subject to Phosphoserine; by host.

This sequence belongs to the adenoviridae hexon-interlacing protein family. As to quaternary structure, homotrimer. Interacts with hexon protein; this interaction tethers the hexons together. Self-interacts with adjacent proteins. Interacts with kinesin light chain KLC1; this interaction leads to capsid disruption at the nuclear pore complex during virus entry into host cell.

The protein resides in the virion. It localises to the host nucleus. Functionally, structural component of the virion that forms triskelion structures consisting of three molecules that stabilize three hexon trimers at the center of each icosahedral facet and fixes the peripentonal hexons. Dispensable for assembly. During virus entry, recruits the anterograde motor kinesin-1 to the capsid docked at the nuclear pore complex thereby subjecting the docked capsid to a pulling force. The resulting tension leads to capsid disruption, dispersion of capsid fragments toward cell periphery and eventually viral DNA entry into the host nucleus. This is Hexon-interlacing protein from Human adenovirus C serotype 2 (HAdV-2).